The chain runs to 162 residues: MFDLGWTELLVIGVVALIVVGPKDLPKLFRNVGRFVGKARGMAREFSRAMEDAADEAGVSDIQKTFKTATNPMGSAMDSVKQATRDLTDSIDPTKFDPESETGKLAADRAENAKKIQAATARAAADRMAREAAEAAAKAEEAEAALSATPASTASSDSETKA.

A helical transmembrane segment spans residues 1-21 (MFDLGWTELLVIGVVALIVVG). 2 disordered regions span residues 69–111 (ATNP…DRAE) and 124–162 (AADR…ETKA). Composition is skewed to basic and acidic residues over residues 83-111 (ATRD…DRAE) and 124-141 (AADR…KAEE). Positions 144-155 (AALSATPASTAS) are enriched in low complexity.

Belongs to the TatB family. The Tat system comprises two distinct complexes: a TatABC complex, containing multiple copies of TatA, TatB and TatC subunits, and a separate TatA complex, containing only TatA subunits. Substrates initially bind to the TatABC complex, which probably triggers association of the separate TatA complex to form the active translocon.

Its subcellular location is the cell inner membrane. In terms of biological role, part of the twin-arginine translocation (Tat) system that transports large folded proteins containing a characteristic twin-arginine motif in their signal peptide across membranes. Together with TatC, TatB is part of a receptor directly interacting with Tat signal peptides. TatB may form an oligomeric binding site that transiently accommodates folded Tat precursor proteins before their translocation. The chain is Sec-independent protein translocase protein TatB from Ruegeria sp. (strain TM1040) (Silicibacter sp.).